We begin with the raw amino-acid sequence, 458 residues long: Serine--tRNA ligase (458 aa).

L-serine is bound at residue T255–E257. ATP contacts are provided by residues R286–E288 and V302. E309 is a binding site for L-serine. E373–S376 contributes to the ATP binding site. T409 serves as a coordination point for L-serine.

The protein belongs to the class-II aminoacyl-tRNA synthetase family. Type-1 seryl-tRNA synthetase subfamily. Homodimer. The tRNA molecule binds across the dimer.

The protein localises to the cytoplasm. It catalyses the reaction tRNA(Ser) + L-serine + ATP = L-seryl-tRNA(Ser) + AMP + diphosphate + H(+). The catalysed reaction is tRNA(Sec) + L-serine + ATP = L-seryl-tRNA(Sec) + AMP + diphosphate + H(+). It functions in the pathway aminoacyl-tRNA biosynthesis; selenocysteinyl-tRNA(Sec) biosynthesis; L-seryl-tRNA(Sec) from L-serine and tRNA(Sec): step 1/1. In terms of biological role, catalyzes the attachment of serine to tRNA(Ser). Is also able to aminoacylate tRNA(Sec) with serine, to form the misacylated tRNA L-seryl-tRNA(Sec), which will be further converted into selenocysteinyl-tRNA(Sec). This chain is Serine--tRNA ligase, found in Ignicoccus hospitalis (strain KIN4/I / DSM 18386 / JCM 14125).